A 238-amino-acid chain; its full sequence is tRNA (guanine-N(1)-)-methyltransferase (238 aa).

S-adenosyl-L-methionine-binding positions include Gly-112 and 131–136 (LGDFIL).

This sequence belongs to the RNA methyltransferase TrmD family. As to quaternary structure, homodimer.

The protein localises to the cytoplasm. The catalysed reaction is guanosine(37) in tRNA + S-adenosyl-L-methionine = N(1)-methylguanosine(37) in tRNA + S-adenosyl-L-homocysteine + H(+). Functionally, specifically methylates guanosine-37 in various tRNAs. The sequence is that of tRNA (guanine-N(1)-)-methyltransferase from Nostoc punctiforme (strain ATCC 29133 / PCC 73102).